The chain runs to 418 residues: Gamma-glutamyl phosphate reductase (418 aa).

This sequence belongs to the gamma-glutamyl phosphate reductase family.

The protein localises to the cytoplasm. It catalyses the reaction L-glutamate 5-semialdehyde + phosphate + NADP(+) = L-glutamyl 5-phosphate + NADPH + H(+). It functions in the pathway amino-acid biosynthesis; L-proline biosynthesis; L-glutamate 5-semialdehyde from L-glutamate: step 2/2. Its function is as follows. Catalyzes the NADPH-dependent reduction of L-glutamate 5-phosphate into L-glutamate 5-semialdehyde and phosphate. The product spontaneously undergoes cyclization to form 1-pyrroline-5-carboxylate. This Thermobifida fusca (strain YX) protein is Gamma-glutamyl phosphate reductase.